The primary structure comprises 180 residues: ATP synthase subunit delta (180 aa).

Belongs to the ATPase delta chain family. F-type ATPases have 2 components, F(1) - the catalytic core - and F(0) - the membrane proton channel. F(1) has five subunits: alpha(3), beta(3), gamma(1), delta(1), epsilon(1). F(0) has three main subunits: a(1), b(2) and c(10-14). The alpha and beta chains form an alternating ring which encloses part of the gamma chain. F(1) is attached to F(0) by a central stalk formed by the gamma and epsilon chains, while a peripheral stalk is formed by the delta and b chains.

It localises to the cell inner membrane. Its function is as follows. F(1)F(0) ATP synthase produces ATP from ADP in the presence of a proton or sodium gradient. F-type ATPases consist of two structural domains, F(1) containing the extramembraneous catalytic core and F(0) containing the membrane proton channel, linked together by a central stalk and a peripheral stalk. During catalysis, ATP synthesis in the catalytic domain of F(1) is coupled via a rotary mechanism of the central stalk subunits to proton translocation. This protein is part of the stalk that links CF(0) to CF(1). It either transmits conformational changes from CF(0) to CF(1) or is implicated in proton conduction. The polypeptide is ATP synthase subunit delta (Parabacteroides distasonis (strain ATCC 8503 / DSM 20701 / CIP 104284 / JCM 5825 / NCTC 11152)).